A 177-amino-acid chain; its full sequence is Interleukin-10 (177 aa).

Residues 1–19 (MPSSSAVLCCLVFLAGVAA) form the signal peptide. Cystine bridges form between C31–C127 and C81–C133. An N-linked (GlcNAc...) asparagine glycan is attached at N135.

Belongs to the IL-10 family. In terms of assembly, homodimer. Interacts with IL10RA and IL10RB.

It is found in the secreted. Major immune regulatory cytokine that acts on many cells of the immune system where it has profound anti-inflammatory functions, limiting excessive tissue disruption caused by inflammation. Mechanistically, IL10 binds to its heterotetrameric receptor comprising IL10RA and IL10RB leading to JAK1 and STAT2-mediated phosphorylation of STAT3. In turn, STAT3 translocates to the nucleus where it drives expression of anti-inflammatory mediators. Targets antigen-presenting cells (APCs) such as macrophages and monocytes and inhibits their release of pro-inflammatory cytokines including granulocyte-macrophage colony-stimulating factor /GM-CSF, granulocyte colony-stimulating factor/G-CSF, IL-1 alpha, IL-1 beta, IL-6, IL-8 and TNF-alpha. Also interferes with antigen presentation by reducing the expression of MHC-class II and co-stimulatory molecules, thereby inhibiting their ability to induce T cell activation. In addition, controls the inflammatory response of macrophages by reprogramming essential metabolic pathways including mTOR signaling. The sequence is that of Interleukin-10 (IL10) from Ovis aries (Sheep).